Here is a 628-residue protein sequence, read N- to C-terminus: Beta-galactosidase large subunit (628 aa).

The active-site Proton donor is the Glu-468. Residue Glu-536 is the Nucleophile of the active site.

This sequence belongs to the glycosyl hydrolase 2 family. As to quaternary structure, heterodimer of a large (LacL) and a small subunit (LacM).

The enzyme catalyses Hydrolysis of terminal non-reducing beta-D-galactose residues in beta-D-galactosides.. Component of a beta-galactosidase. This chain is Beta-galactosidase large subunit, found in Lactobacillus helveticus (Lactobacillus suntoryeus).